The primary structure comprises 415 residues: E3 ubiquitin-protein ligase RNF135 (415 aa).

The segment at 21-67 (CIICQGLLDWPTTLPCGHSFCLQCLKDLWVSKRAGVDSCPWACPICR) adopts an RING-type zinc-finger fold. The stretch at 181–206 (TFSASQKKIQEILRDLEKIQETLQGS) forms a coiled coil. A B30.2/SPRY domain is found at 228–415 (PDQRYPVSRK…LTPGNYLEIL (188 aa)).

As to quaternary structure, homodimer. Interacts (homodimer) with RIGI (double-stranded RNA-bound oligomeric form); involved in both RIGI ubiquitination, oligomerization into filaments associated with viral RNAs and the bridging of these filaments. Interacts with UBE2D3 and UBE2N; E2 ubiquitin ligases involved in RNF135-mediated ubiquitination of RIGI and activation of the RIG-I signaling pathway. Interacts with PCBP2.

It is found in the cytoplasm. Its subcellular location is the stress granule. The catalysed reaction is S-ubiquitinyl-[E2 ubiquitin-conjugating enzyme]-L-cysteine + [acceptor protein]-L-lysine = [E2 ubiquitin-conjugating enzyme]-L-cysteine + N(6)-ubiquitinyl-[acceptor protein]-L-lysine.. The protein operates within protein modification; protein ubiquitination. In terms of biological role, E2-dependent E3 ubiquitin-protein ligase that functions as a RIGI coreceptor in the sensing of viral RNAs in cell cytoplasm and the activation of the antiviral innate immune response. Together with the UBE2D3, UBE2N and UB2V1 E2 ligases, catalyzes the 'Lys-63'-linked polyubiquitination of RIGI oligomerized on viral RNAs, an essential step in the activation of the RIG-I signaling pathway. Through a ubiquitin-independent parallel mechanism, which consists in bridging RIGI filaments forming on longer viral RNAs, further activates the RIG-I signaling pathway. This second mechanism that synergizes with the ubiquitin-dependent one would thereby allow an RNA length-dependent regulation of the RIG-I signaling pathway. Associated with the E2 ligase UBE2N, also constitutively synthesizes unanchored 'Lys-63'-linked polyubiquitin chains that may also activate the RIG-I signaling pathway. This chain is E3 ubiquitin-protein ligase RNF135, found in Rattus norvegicus (Rat).